We begin with the raw amino-acid sequence, 92 residues long: Small ribosomal subunit protein uS19 (92 aa).

This sequence belongs to the universal ribosomal protein uS19 family.

Functionally, protein S19 forms a complex with S13 that binds strongly to the 16S ribosomal RNA. This chain is Small ribosomal subunit protein uS19, found in Vibrio vulnificus (strain CMCP6).